A 358-amino-acid chain; its full sequence is Carbamoyl phosphate synthase small chain (358 aa).

The tract at residues methionine 1–valine 168 is CPSase. Residues serine 45, glycine 219, and glycine 221 each coordinate L-glutamine. The region spanning asparagine 171–lysine 357 is the Glutamine amidotransferase type-1 domain. The Nucleophile role is filled by cysteine 246. L-glutamine contacts are provided by methionine 247, glutamine 250, asparagine 288, glycine 290, and tyrosine 291. Catalysis depends on residues histidine 330 and aspartate 332.

The protein belongs to the CarA family. As to quaternary structure, composed of two chains; the small (or glutamine) chain promotes the hydrolysis of glutamine to ammonia, which is used by the large (or ammonia) chain to synthesize carbamoyl phosphate. Tetramer of heterodimers (alpha,beta)4.

The catalysed reaction is hydrogencarbonate + L-glutamine + 2 ATP + H2O = carbamoyl phosphate + L-glutamate + 2 ADP + phosphate + 2 H(+). It carries out the reaction L-glutamine + H2O = L-glutamate + NH4(+). The protein operates within amino-acid biosynthesis; L-arginine biosynthesis; carbamoyl phosphate from bicarbonate: step 1/1. It participates in pyrimidine metabolism; UMP biosynthesis via de novo pathway; (S)-dihydroorotate from bicarbonate: step 1/3. Functionally, small subunit of the glutamine-dependent carbamoyl phosphate synthetase (CPSase). CPSase catalyzes the formation of carbamoyl phosphate from the ammonia moiety of glutamine, carbonate, and phosphate donated by ATP, constituting the first step of 2 biosynthetic pathways, one leading to arginine and/or urea and the other to pyrimidine nucleotides. The small subunit (glutamine amidotransferase) binds and cleaves glutamine to supply the large subunit with the substrate ammonia. This Streptococcus agalactiae serotype III (strain NEM316) protein is Carbamoyl phosphate synthase small chain.